Consider the following 231-residue polypeptide: Nitrate reductase [NAD(P)H] (231 aa).

In terms of domain architecture, FAD-binding FR-type spans 1–85 (PQKLGLPVGR…KGPHRHIEYT (85 aa)). FAD contacts are provided by residues 25–28 (RAYT), 42–46 (LIKIY), Phe-47, 59–61 (LMS), and Thr-112.

The protein belongs to the nitrate reductase family. As to quaternary structure, homodimer. FAD serves as cofactor. It depends on heme as a cofactor. Mo-molybdopterin is required as a cofactor.

It carries out the reaction nitrite + NAD(+) + H2O = nitrate + NADH + H(+). The enzyme catalyses nitrite + NADP(+) + H2O = nitrate + NADPH + H(+). In terms of biological role, nitrate reductase is a key enzyme involved in the first step of nitrate assimilation in plants, fungi and bacteria. The protein is Nitrate reductase [NAD(P)H] (NAR) of Zea mays (Maize).